Reading from the N-terminus, the 463-residue chain is Glutamate--tRNA ligase 1 (463 aa).

Positions 10–20 match the 'HIGH' region motif; sequence PSPTGYLHIGG. The 'KMSKS' region motif lies at 238-242; it reads KLSKR. Lysine 241 contributes to the ATP binding site.

The protein belongs to the class-I aminoacyl-tRNA synthetase family. Glutamate--tRNA ligase type 1 subfamily. As to quaternary structure, monomer.

It is found in the cytoplasm. It carries out the reaction tRNA(Glu) + L-glutamate + ATP = L-glutamyl-tRNA(Glu) + AMP + diphosphate. In terms of biological role, catalyzes the attachment of glutamate to tRNA(Glu) in a two-step reaction: glutamate is first activated by ATP to form Glu-AMP and then transferred to the acceptor end of tRNA(Glu). This chain is Glutamate--tRNA ligase 1, found in Helicobacter pylori (strain P12).